The sequence spans 126 residues: Pancreatic polypeptide prohormone (126 aa).

The N-terminal stretch at 1-26 (MTATRCCLWLLLLGTCMALLLPEAWG) is a signal peptide. Y62 carries the tyrosine amide modification. The tract at residues 77-126 (RQSHAAAPGGSHRHPPAGLPAAKGGTGVSGSPPKPWDCLPCRAHSLPSQS) is disordered.

The protein belongs to the NPY family. In terms of processing, no icosapeptide-like peptide is cleaved from the C-terminal.

It localises to the secreted. Functionally, hormone secreted by pancreatic cells that acts as a regulator of pancreatic and gastrointestinal functions probably by signaling through the G protein-coupled receptor NPY4R2. The polypeptide is Pancreatic polypeptide prohormone (PPY) (Cavia porcellus (Guinea pig)).